A 417-amino-acid chain; its full sequence is Putative competence-damage inducible protein (417 aa).

Belongs to the CinA family.

This is Putative competence-damage inducible protein from Leuconostoc citreum (strain KM20).